The following is a 257-amino-acid chain: Type III pantothenate kinase (257 aa).

6–13 (DVGNTSTK) lines the ATP pocket. 109–112 (GADR) serves as a coordination point for substrate. The active-site Proton acceptor is the D111. D132 is a binding site for K(+). T135 contributes to the ATP binding site. T187 lines the substrate pocket.

This sequence belongs to the type III pantothenate kinase family. As to quaternary structure, homodimer. It depends on NH4(+) as a cofactor. K(+) serves as cofactor.

It is found in the cytoplasm. The enzyme catalyses (R)-pantothenate + ATP = (R)-4'-phosphopantothenate + ADP + H(+). It participates in cofactor biosynthesis; coenzyme A biosynthesis; CoA from (R)-pantothenate: step 1/5. In terms of biological role, catalyzes the phosphorylation of pantothenate (Pan), the first step in CoA biosynthesis. The polypeptide is Type III pantothenate kinase (Anaplasma marginale (strain St. Maries)).